The chain runs to 169 residues: Phosphopantetheine adenylyltransferase (169 aa).

Threonine 14 contacts substrate. ATP contacts are provided by residues 14-15 (TF) and histidine 22. Substrate-binding residues include lysine 46, leucine 78, and arginine 92. ATP-binding positions include 93 to 95 (GLR), glutamate 103, and 128 to 134 (HSFISSS).

This sequence belongs to the bacterial CoaD family. As to quaternary structure, homohexamer. The cofactor is Mg(2+).

Its subcellular location is the cytoplasm. The enzyme catalyses (R)-4'-phosphopantetheine + ATP + H(+) = 3'-dephospho-CoA + diphosphate. The protein operates within cofactor biosynthesis; coenzyme A biosynthesis; CoA from (R)-pantothenate: step 4/5. Reversibly transfers an adenylyl group from ATP to 4'-phosphopantetheine, yielding dephospho-CoA (dPCoA) and pyrophosphate. This chain is Phosphopantetheine adenylyltransferase, found in Stenotrophomonas maltophilia (strain R551-3).